The primary structure comprises 527 residues: ATP-dependent RNA helicase DBP3 (527 aa).

Positions 1–11 (MSKDHKDKKRK) are enriched in basic residues. The tract at residues 1–89 (MSKDHKDKKR…TGYSQSPALT (89 aa)) is disordered. Over residues 12–24 (HSDEATEEVEKKT) the composition is skewed to basic and acidic residues. Basic residues predominate over residues 25–44 (KVSKKEKKDKKEKKEKKDKK). The segment covering 45-71 (EKKDKSEKKDKSEKKEKKEKKESEDVP) has biased composition (basic and acidic residues). A compositionally biased stretch (polar residues) spans 72 to 89 (TKSSAVVSTGYSQSPALT). The Q motif signature appears at 119–145 (LGFDQIDLDSRIASVISKFPTPTPIQA). The Helicase ATP-binding domain maps to 148–319 (WPYLLSGKDV…STFMNSPVKV (172 aa)). 161–168 (AETGSGKT) is an ATP binding site. The short motif at 266-269 (DEAD) is the DEAD box element. Residues 348–497 (KLLSLLRKYQ…PVPDELLKFG (150 aa)) enclose the Helicase C-terminal domain.

The protein belongs to the DEAD box helicase family. DDX5/DBP2 subfamily.

It localises to the nucleus. It is found in the nucleolus. It catalyses the reaction ATP + H2O = ADP + phosphate + H(+). Its function is as follows. ATP-dependent RNA helicase required for 60S ribosomal subunit synthesis. Involved in efficient pre-rRNA processing, predominantly at site A3, which is necessary for the normal formation of 25S and 5.8S rRNAs. The sequence is that of ATP-dependent RNA helicase DBP3 (DBP3) from Debaryomyces hansenii (strain ATCC 36239 / CBS 767 / BCRC 21394 / JCM 1990 / NBRC 0083 / IGC 2968) (Yeast).